The sequence spans 199 residues: Small ribosomal subunit protein eS6 (199 aa).

Positions 172–183 (KEQREKRSESLA) are enriched in basic and acidic residues. The interval 172-199 (KEQREKRSESLAKKRSRLSAASKPSIAA) is disordered.

The protein belongs to the eukaryotic ribosomal protein eS6 family. Ribosomal protein S6 is the major substrate of protein kinases in eukaryote ribosomes.

Functionally, component of the 40S small ribosomal subunit. Plays an important role in controlling cell growth and proliferation through the selective translation of particular classes of mRNA. The polypeptide is Small ribosomal subunit protein eS6 (RPS6) (Nicotiana tabacum (Common tobacco)).